Consider the following 213-residue polypeptide: ATP-dependent Clp protease proteolytic subunit 1 (213 aa).

Serine 108 serves as the catalytic Nucleophile. Histidine 133 is a catalytic residue.

It belongs to the peptidase S14 family. Fourteen ClpP subunits assemble into 2 heptameric rings which stack back to back to give a disk-like structure with a central cavity, resembling the structure of eukaryotic proteasomes.

It localises to the cytoplasm. The catalysed reaction is Hydrolysis of proteins to small peptides in the presence of ATP and magnesium. alpha-casein is the usual test substrate. In the absence of ATP, only oligopeptides shorter than five residues are hydrolyzed (such as succinyl-Leu-Tyr-|-NHMec, and Leu-Tyr-Leu-|-Tyr-Trp, in which cleavage of the -Tyr-|-Leu- and -Tyr-|-Trp bonds also occurs).. Cleaves peptides in various proteins in a process that requires ATP hydrolysis. Has a chymotrypsin-like activity. Plays a major role in the degradation of misfolded proteins. This chain is ATP-dependent Clp protease proteolytic subunit 1, found in Frankia casuarinae (strain DSM 45818 / CECT 9043 / HFP020203 / CcI3).